We begin with the raw amino-acid sequence, 365 residues long: Beta-parvin (365 aa).

The span at 1–12 (MSSAPPRSPTPR) shows a compositional bias: pro residues. Residues 1–52 (MSSAPPRSPTPRAPKMKKDESFLGKLGGTLARKKKTREVTDLQEEGKSAINS) are disordered. Ser-8 bears the Phosphoserine mark. A compositionally biased stretch (basic and acidic residues) spans 37-47 (REVTDLQEEGK). 2 Calponin-homology (CH) domains span residues 88–195 (KELV…MHFR) and 255–362 (NLVK…TKYK).

The protein belongs to the parvin family. In terms of assembly, interacts with ILK, ARHGEF6, PXN (via LD motifs), ACTN2 and actin. Interacts with DYSF. Post-translationally, phosphorylated by ILK. In terms of tissue distribution, expressed predominantly in heart and moderately in spleen, lung and skeletal muscle.

The protein resides in the cell junction. It is found in the focal adhesion. Its subcellular location is the cell membrane. It localises to the cytoplasm. The protein localises to the cytoskeleton. The protein resides in the cell projection. It is found in the lamellipodium. Its subcellular location is the myofibril. It localises to the sarcomere. The protein localises to the z line. Its function is as follows. Adapter protein that plays a role in integrin signaling via ILK and in activation of the GTPases CDC42 and RAC1 by guanine exchange factors, such as ARHGEF6. Is involved in the reorganization of the actin cytoskeleton and formation of lamellipodia. Plays a role in cell adhesion, cell spreading, establishment or maintenance of cell polarity, and cell migration. The chain is Beta-parvin (Parvb) from Mus musculus (Mouse).